Reading from the N-terminus, the 178-residue chain is ATP synthase subunit delta (178 aa).

It belongs to the ATPase delta chain family. In terms of assembly, F-type ATPases have 2 components, F(1) - the catalytic core - and F(0) - the membrane proton channel. F(1) has five subunits: alpha(3), beta(3), gamma(1), delta(1), epsilon(1). F(0) has three main subunits: a(1), b(2) and c(10-14). The alpha and beta chains form an alternating ring which encloses part of the gamma chain. F(1) is attached to F(0) by a central stalk formed by the gamma and epsilon chains, while a peripheral stalk is formed by the delta and b chains.

The protein localises to the cell membrane. Its function is as follows. F(1)F(0) ATP synthase produces ATP from ADP in the presence of a proton or sodium gradient. F-type ATPases consist of two structural domains, F(1) containing the extramembraneous catalytic core and F(0) containing the membrane proton channel, linked together by a central stalk and a peripheral stalk. During catalysis, ATP synthesis in the catalytic domain of F(1) is coupled via a rotary mechanism of the central stalk subunits to proton translocation. This protein is part of the stalk that links CF(0) to CF(1). It either transmits conformational changes from CF(0) to CF(1) or is implicated in proton conduction. This Streptococcus equi subsp. zooepidemicus (strain MGCS10565) protein is ATP synthase subunit delta.